Here is a 181-residue protein sequence, read N- to C-terminus: Large ribosomal subunit protein uL6 (181 aa).

It belongs to the universal ribosomal protein uL6 family. In terms of assembly, part of the 50S ribosomal subunit.

In terms of biological role, this protein binds to the 23S rRNA, and is important in its secondary structure. It is located near the subunit interface in the base of the L7/L12 stalk, and near the tRNA binding site of the peptidyltransferase center. The polypeptide is Large ribosomal subunit protein uL6 (Desulforudis audaxviator (strain MP104C)).